We begin with the raw amino-acid sequence, 1275 residues long: ATP-dependent helicase/nuclease subunit A (1275 aa).

Residues 4-481 (PKWTKEQLEV…IMLYKNFRSR (478 aa)) enclose the UvrD-like helicase ATP-binding domain. 25-32 (AAAGSGKT) contributes to the ATP binding site. In terms of domain architecture, UvrD-like helicase C-terminal spans 531 to 839 (TEIHLIQKDN…RIMSIHKSKG (309 aa)).

This sequence belongs to the helicase family. AddA subfamily. Heterodimer of AddA and AddB/RexB. Requires Mg(2+) as cofactor.

The catalysed reaction is Couples ATP hydrolysis with the unwinding of duplex DNA by translocating in the 3'-5' direction.. It catalyses the reaction ATP + H2O = ADP + phosphate + H(+). In terms of biological role, the heterodimer acts as both an ATP-dependent DNA helicase and an ATP-dependent, dual-direction single-stranded exonuclease. Recognizes the chi site generating a DNA molecule suitable for the initiation of homologous recombination. The AddA nuclease domain is required for chi fragment generation; this subunit has the helicase and 3' -&gt; 5' nuclease activities. The polypeptide is ATP-dependent helicase/nuclease subunit A (Clostridioides difficile (strain 630) (Peptoclostridium difficile)).